A 153-amino-acid chain; its full sequence is Calmodulin-like protein 4 (153 aa).

EF-hand domains lie at 8-43 (DQIN…LGAS), 44-79 (PTPG…QIKQ), 81-116 (DPKK…LGEK), and 117-152 (LTHK…PVRD).

The protein belongs to the calmodulin family. Interacts with MYO7B; the interaction mediates the association of CALML4 with the IMAC/intermicrovillar adhesion complex. Interacts with MYO7A. In terms of tissue distribution, expressed in the small intestine, in both mature enterocytes on the villus surface and immature cells that reside in the crypt stem-cell niche.

The protein localises to the cell projection. Its subcellular location is the microvillus. Its function is as follows. As part of the intermicrovillar adhesion complex/IMAC plays a role in epithelial brush border differentiation, controlling microvilli organization and length. Acts as a light chain for MYO7B and is required for efficient targeting of the IMAC to the tips of border brush microvilli. The sequence is that of Calmodulin-like protein 4 (Calml4) from Mus musculus (Mouse).